Reading from the N-terminus, the 472-residue chain is MVSATRWETAIEVTPWIAAIAEQVPLFGTDGIRGRVGEHLTAPLAQQVGFWTGQVLRQAGGDRGPVVVGQDSRNSSNMLAMALSSGLAAAGVEVLHLGLCPTPGVAYLTHHSEAIGGVMISASHNPPGDNGIKVFGADGSKLDRQLQAAIEAGLRGQQTSLPATTWGQHYYQPQLADHYQAAIAQSLGQRANLQGLKIVLDLAWGAAALLAPRLFRELGAEVIALHDLPDGNQINVNCGSTHLARLQAAVLEQGADMGFAFDGDADRVLAVDGRGRSVDGDHILFLWGRELEQQQQLPGQAIVTTVMANLGFERAWQAVGGEFVRTAVGDQYVQAEMQARGAMLGGEQSGHILCRHYALTGDGTLTAAHVAALVQASGVSLADLVDQSFRPYPQLLRNVRVEDRDRRCNWQNCAALTQAIAAAETDMGDRGRVLVRASGTEPLLRIMVEAEEAQQVEHWTTHLVQVAESHLL.

Ser-123 (phosphoserine intermediate) is an active-site residue. 4 residues coordinate Mg(2+): Ser-123, Asp-262, Asp-264, and Asp-266. The residue at position 123 (Ser-123) is a Phosphoserine.

This sequence belongs to the phosphohexose mutase family. Requires Mg(2+) as cofactor. Post-translationally, activated by phosphorylation.

It catalyses the reaction alpha-D-glucosamine 1-phosphate = D-glucosamine 6-phosphate. Catalyzes the conversion of glucosamine-6-phosphate to glucosamine-1-phosphate. The protein is Phosphoglucosamine mutase of Synechococcus elongatus (strain ATCC 33912 / PCC 7942 / FACHB-805) (Anacystis nidulans R2).